The following is a 122-amino-acid chain: Large ribosomal subunit protein uL14c (122 aa).

The protein belongs to the universal ribosomal protein uL14 family. Part of the 50S ribosomal subunit.

It is found in the plastid. Its subcellular location is the chloroplast. Its function is as follows. Binds to 23S rRNA. The protein is Large ribosomal subunit protein uL14c of Calycanthus floridus var. glaucus (Eastern sweetshrub).